The following is a 451-amino-acid chain: UDP-glycosyltransferase 76C4 (451 aa).

UDP-alpha-D-glucose is bound by residues Ser-273, 332-334 (APQ), 349-357 (HNGWNSTVE), and 371-374 (RWDQ).

The protein belongs to the UDP-glycosyltransferase family.

This is UDP-glycosyltransferase 76C4 (UGT76C4) from Arabidopsis thaliana (Mouse-ear cress).